A 100-amino-acid chain; its full sequence is NADH-quinone oxidoreductase subunit K (100 aa).

A run of 3 helical transmembrane segments spans residues 4-24 (LQHG…GLVI), 28-48 (LLFM…AFVV), and 60-80 (VMYI…LALL).

Belongs to the complex I subunit 4L family. NDH-1 is composed of 13 different subunits. Subunits NuoA, H, J, K, L, M, N constitute the membrane sector of the complex.

Its subcellular location is the cell inner membrane. It catalyses the reaction a quinone + NADH + 5 H(+)(in) = a quinol + NAD(+) + 4 H(+)(out). NDH-1 shuttles electrons from NADH, via FMN and iron-sulfur (Fe-S) centers, to quinones in the respiratory chain. The immediate electron acceptor for the enzyme in this species is believed to be ubiquinone. Couples the redox reaction to proton translocation (for every two electrons transferred, four hydrogen ions are translocated across the cytoplasmic membrane), and thus conserves the redox energy in a proton gradient. The sequence is that of NADH-quinone oxidoreductase subunit K from Citrobacter koseri (strain ATCC BAA-895 / CDC 4225-83 / SGSC4696).